The primary structure comprises 1071 residues: Myosin IF heavy chain (1071 aa).

The Myosin motor domain occupies 40 to 736; it reads VGLTDMCFLE…TLFHFEELRQ (697 aa). 134–141 is a binding site for ATP; the sequence is GESGSGKT. Positions 610–632 are actin-binding; the sequence is INDLIGKLNTCQPHYIRCIKSNE. The region spanning 739–768 is the IQ domain; that stretch reads LPSIVITIQRVWRGYKVRKWYKQELQRLRE. The region spanning 870–1069 is the TH1 domain; it reads SRKKEWDCRR…KGNTAIVYYN (200 aa).

This sequence belongs to the TRAFAC class myosin-kinesin ATPase superfamily. Myosin family. Myosin I heavy chain is single-headed. Dimer of a heavy and a light chain. Inability to self-assemble into filaments.

Myosin is a protein that binds to actin and has ATPase activity that is activated by actin. In Dictyostelium discoideum (Social amoeba), this protein is Myosin IF heavy chain (myoF).